Reading from the N-terminus, the 129-residue chain is Glycine cleavage system H protein (129 aa).

In terms of domain architecture, Lipoyl-binding spans 24 to 106 (TYTVGITEHA…YAGGWIFKIK (83 aa)). Lys65 carries the N6-lipoyllysine modification.

It belongs to the GcvH family. In terms of assembly, the glycine cleavage system is composed of four proteins: P, T, L and H. (R)-lipoate serves as cofactor.

The glycine cleavage system catalyzes the degradation of glycine. The H protein shuttles the methylamine group of glycine from the P protein to the T protein. This is Glycine cleavage system H protein from Escherichia coli O139:H28 (strain E24377A / ETEC).